Here is a 124-residue protein sequence, read N- to C-terminus: Fluoride-specific ion channel FluC (124 aa).

4 consecutive transmembrane segments (helical) span residues 4–24 (VIFI…LSGW), 32–52 (AFPY…GLIM), 68–88 (GLTI…YETF), and 96–116 (LLIA…FTWL). Na(+)-binding residues include Gly-75 and Thr-78.

This sequence belongs to the fluoride channel Fluc/FEX (TC 1.A.43) family.

Its subcellular location is the cell inner membrane. The catalysed reaction is fluoride(in) = fluoride(out). Na(+) is not transported, but it plays an essential structural role and its presence is essential for fluoride channel function. Fluoride-specific ion channel. Important for reducing fluoride concentration in the cell, thus reducing its toxicity. This is Fluoride-specific ion channel FluC from Geotalea daltonii (strain DSM 22248 / JCM 15807 / FRC-32) (Geobacter daltonii).